Reading from the N-terminus, the 248-residue chain is 4-hydroxy-tetrahydrodipicolinate reductase (248 aa).

Residues G8–M13, G75–T77, and A99–M102 contribute to the NAD(+) site. The active-site Proton donor/acceptor is H131. H132 serves as a coordination point for (S)-2,3,4,5-tetrahydrodipicolinate. The Proton donor role is filled by K135. Position 141-142 (G141–T142) interacts with (S)-2,3,4,5-tetrahydrodipicolinate.

Belongs to the DapB family.

It is found in the cytoplasm. The enzyme catalyses (S)-2,3,4,5-tetrahydrodipicolinate + NAD(+) + H2O = (2S,4S)-4-hydroxy-2,3,4,5-tetrahydrodipicolinate + NADH + H(+). The catalysed reaction is (S)-2,3,4,5-tetrahydrodipicolinate + NADP(+) + H2O = (2S,4S)-4-hydroxy-2,3,4,5-tetrahydrodipicolinate + NADPH + H(+). It functions in the pathway amino-acid biosynthesis; L-lysine biosynthesis via DAP pathway; (S)-tetrahydrodipicolinate from L-aspartate: step 4/4. Functionally, catalyzes the conversion of 4-hydroxy-tetrahydrodipicolinate (HTPA) to tetrahydrodipicolinate. The sequence is that of 4-hydroxy-tetrahydrodipicolinate reductase from Campylobacter jejuni subsp. doylei (strain ATCC BAA-1458 / RM4099 / 269.97).